Reading from the N-terminus, the 499-residue chain is uncharacterized protein (499 aa).

11 consecutive transmembrane segments (helical) span residues 5-25 (FLLVLIPVLILYFYNLGYNAV), 79-99 (LGLRFFHALLGVFTGVLTYLL), 110-130 (ALLSFLILSLSFIFIANARYA), 132-152 (PEVPFTFFITLSLYLWYEYFT), 170-190 (VLTKGPAGFVLPAGVVFFYLL), 203-223 (YAGTLMVFLLSGWWFLYQYLV), 252-272 (ALDINVSFLPYSFLFFFALFW), 286-306 (VWFSFIFLIFSIVKMKIPVYI), 332-352 (LSLIFLWTVLVLATLALSLYF), 354-374 (FSATLFPLIPLLLLPFFLKKY), and 377-397 (LPAFGAFAFLFYLSSVILPYV).

Belongs to the glycosyltransferase 39 family.

It is found in the cell membrane. This is an uncharacterized protein from Aquifex aeolicus (strain VF5).